Reading from the N-terminus, the 244-residue chain is tRNA pseudouridine synthase A (244 aa).

Asp52 functions as the Nucleophile in the catalytic mechanism. Tyr110 contributes to the substrate binding site.

It belongs to the tRNA pseudouridine synthase TruA family. In terms of assembly, homodimer.

It carries out the reaction uridine(38/39/40) in tRNA = pseudouridine(38/39/40) in tRNA. Its function is as follows. Formation of pseudouridine at positions 38, 39 and 40 in the anticodon stem and loop of transfer RNAs. The protein is tRNA pseudouridine synthase A of Acetivibrio thermocellus (strain ATCC 27405 / DSM 1237 / JCM 9322 / NBRC 103400 / NCIMB 10682 / NRRL B-4536 / VPI 7372) (Clostridium thermocellum).